Consider the following 201-residue polypeptide: Small ribosomal subunit protein uS4 (201 aa).

Positions 1-42 (MARYTGPVTRKSRRLGTDLVGGDQSFEKRPYPPGQHGRARIK) are disordered. Residues 91-157 (SRLDNVVYRA…VPFQIARETA (67 aa)) enclose the S4 RNA-binding domain.

This sequence belongs to the universal ribosomal protein uS4 family. As to quaternary structure, part of the 30S ribosomal subunit. Contacts protein S5. The interaction surface between S4 and S5 is involved in control of translational fidelity.

In terms of biological role, one of the primary rRNA binding proteins, it binds directly to 16S rRNA where it nucleates assembly of the body of the 30S subunit. With S5 and S12 plays an important role in translational accuracy. The protein is Small ribosomal subunit protein uS4 of Mycobacterium marinum (strain ATCC BAA-535 / M).